The chain runs to 52 residues: MIEPSLKALASKYNCEKSICRKCYARLPPRATNCRKRKCGHTNQLRPKKKLK.

Cys20, Cys23, Cys34, and Cys39 together coordinate Zn(2+).

The protein belongs to the eukaryotic ribosomal protein eL40 family. Component of the large ribosomal subunit. Mature ribosomes consist of a small (40S) and a large (60S) subunit. The 40S subunit contains about 32 different proteins and 1 molecule of RNA (18S). The 60S subunit contains 45 different proteins and 3 molecules of RNA (25S, 5.8S and 5S). The cofactor is Zn(2+).

It localises to the cytoplasm. Component of the ribosome, a large ribonucleoprotein complex responsible for the synthesis of proteins in the cell. The small ribosomal subunit (SSU) binds messenger RNAs (mRNAs) and translates the encoded message by selecting cognate aminoacyl-transfer RNA (tRNA) molecules. The large subunit (LSU) contains the ribosomal catalytic site termed the peptidyl transferase center (PTC), which catalyzes the formation of peptide bonds, thereby polymerizing the amino acids delivered by tRNAs into a polypeptide chain. The nascent polypeptides leave the ribosome through a tunnel in the LSU and interact with protein factors that function in enzymatic processing, targeting, and the membrane insertion of nascent chains at the exit of the ribosomal tunnel. The sequence is that of Large ribosomal subunit protein eL40 from Candida albicans (strain SC5314 / ATCC MYA-2876) (Yeast).